A 655-amino-acid polypeptide reads, in one-letter code: Putative sensor protein Sfri_3689 (655 aa).

The N-terminal stretch at 1–17 is a signal peptide; it reads MKTLLLLLIIITMPVLA. A helical membrane pass occupies residues 252–272; it reads FALAILVAIMSAIGMIFTGFI. Positions 419–653 constitute a Histidine kinase domain; it reads GIAHEINNPT…QIRLIFALAQ (235 aa). The residue at position 422 (His422) is a Phosphohistidine; by autocatalysis.

Its subcellular location is the cell membrane. The catalysed reaction is ATP + protein L-histidine = ADP + protein N-phospho-L-histidine.. In Shewanella frigidimarina (strain NCIMB 400), this protein is Putative sensor protein Sfri_3689.